The chain runs to 883 residues: MALYREGKAAMAADGTVTGTGTKWQSSLSLIRPGATIMFLSSPIQMAVVNKVVSDTEIKAITTNGAVVASSDYAILLSDSLTVDGLAQDVAETLRYYQSQETVIADAVEFFKNFDFDSLQDLANQINADSESAQSSAAAAAASENAAKTSENNAKSSEVAAENARDQVQQIINDAGDASTLVVLANPDGFRHIGRCKDIATLRTIEPVESRQVIEVLSYYNGLAQGGGTFWYDPNDSVTEDNGGSCIVTNGGKRWKRIIDGAVDVLSFGAKPDDISFDSAPHIQAALDNHDAVSLYGRSYYIGSPIYMPSRTVFDGMGGKLTSIAPSTAGFMAGSIFAPGNYHPDFWEEVPKVAATTTLGSANITLADPNIVNVGDIIRLSSTTGVLSAGFFVSEYLQMARVLSKTGNVITIDGPVESQLTLVAANANQPGYLARFNKPLFCCVDSIIQNIEIDTWDYWTADSATYNVKFSNIWGSAKAVAYGNTFCRSLFEDIRIVFSGRVSELAFGSHDTNLVRITAIASPKGLSASVVFGWAESGRRCTIDTFSIMLNANANPSTVIRVSGHRDSLIKNGSIYVHNNTNNILSVENYGTTADGVRPDCDNITFENVSIFVTGSSAVVCDVYKSADNSVIKNVAFKNIKYFGPTPSVALYRARGTLANFVKGVQANISSDTGGAIVLSNSENNVLTFTGPVSVTSLVSAAAKNTLSIRNYARSSAKANNFTQESTLNVTDTTANAVSKEFTYPAGSLRINDKIKLSLGGSTAGTVGKKTVQVGFIGSDGAFKYVELAALATDQVYWTMEVEISFLRTTNSQTNELETSAIITSFLSKGAATGAALSGSRALAVVSDLALSNFVVQVRAWKENAADGLSLSRMNLQLEDLTA.

A compositionally biased stretch (low complexity) spans 137-157 (AAAAAASENAAKTSENNAKSS). Residues 137 to 161 (AAAAAASENAAKTSENNAKSSEVAA) form a disordered region.

The protein in the N-terminal section; belongs to the Webervirus depolymerase family. This sequence in the C-terminal section; belongs to the K63-specific depolymerase family. In terms of assembly, homotrimer.

The protein resides in the virion. Functions as a receptor binding protein (RBP) and probably mediates the attachment to the host capsular exopolysaccharides. Displays a depolymerase activity that specifically degrades the K63-type polysaccharides of Klebsiella pneumoniae capsule, which allows the phage to reach the host cell membrane and bind the entry receptor. The chain is Depolymerase, capsule K63-specific from Klebsiella phage KP36 (Bacteriophage KP36).